Here is a 681-residue protein sequence, read N- to C-terminus: Translation factor GUF1 homolog, chloroplastic (681 aa).

A chloroplast-targeting transit peptide spans methionine 1–glutamine 51. The region spanning serine 84–leucine 265 is the tr-type G domain. Residues alanine 93–serine 100, aspartate 158–histidine 162, and asparagine 212–aspartate 215 contribute to the GTP site.

It belongs to the TRAFAC class translation factor GTPase superfamily. Classic translation factor GTPase family. LepA subfamily.

It localises to the plastid. Its subcellular location is the chloroplast. The enzyme catalyses GTP + H2O = GDP + phosphate + H(+). Functionally, promotes chloroplast protein synthesis. May act as a fidelity factor of the translation reaction, by catalyzing a one-codon backward translocation of tRNAs on improperly translocated ribosomes. This is Translation factor GUF1 homolog, chloroplastic from Arabidopsis thaliana (Mouse-ear cress).